A 534-amino-acid polypeptide reads, in one-letter code: Bifunctional pantoate ligase/cytidylate kinase (534 aa).

The pantoate--beta-alanine ligase stretch occupies residues 1-302 (MRLLTTVAAL…LGSTRLIDNT (302 aa)). 48–55 (MGSLHQGH) contributes to the ATP binding site. The active-site Proton donor is the histidine 55. Glutamine 79 provides a ligand contact to (R)-pantoate. Glutamine 79 contacts beta-alanine. An ATP-binding site is contributed by 172–175 (GQKD). Glutamine 178 contacts (R)-pantoate. Residues valine 201 and 209–212 (CSSR) each bind ATP. A cytidylate kinase region spans residues 303–534 (ILRDRQPIIA…DYYQQRLSQW (232 aa)).

In the N-terminal section; belongs to the pantothenate synthetase family. It in the C-terminal section; belongs to the cytidylate kinase family. Type 1 subfamily.

It is found in the cytoplasm. It carries out the reaction (R)-pantoate + beta-alanine + ATP = (R)-pantothenate + AMP + diphosphate + H(+). It catalyses the reaction CMP + ATP = CDP + ADP. The enzyme catalyses dCMP + ATP = dCDP + ADP. It functions in the pathway cofactor biosynthesis; (R)-pantothenate biosynthesis; (R)-pantothenate from (R)-pantoate and beta-alanine: step 1/1. Its function is as follows. Catalyzes the condensation of pantoate with beta-alanine in an ATP-dependent reaction via a pantoyl-adenylate intermediate. Functionally, catalyzes the transfer of a phosphate group from ATP to either CMP or dCMP to form CDP or dCDP and ADP, respectively. The polypeptide is Bifunctional pantoate ligase/cytidylate kinase (Nostoc sp. (strain PCC 7120 / SAG 25.82 / UTEX 2576)).